Here is a 759-residue protein sequence, read N- to C-terminus: ARF GTPase-activating protein GIT2 (759 aa).

Residues 1-124 (MSKRLRSNDV…AFVHRLPCRD (124 aa)) form the Arf-GAP domain. Residues 11–34 (CADCSGPDPSWASVNRGTLICDEC) form a C4-type zinc finger. ANK repeat units follow at residues 132 to 161 (DLSK…QANF), 166 to 198 (KGST…THDS), and 199 to 228 (SGKT…ELTD). Disordered regions lie at residues 376–422 (VSNQ…DLSD) and 469–641 (QSEN…PSTE). Acidic residues predominate over residues 385-402 (QDNDQPDYDSVASDEDTD). Residues 451–478 (NNNLSGELRIMQKKLQTLQSENSSLRRQ) adopt a coiled-coil conformation. The span at 469 to 489 (QSENSSLRRQATASACQVQTA) shows a compositional bias: polar residues. The span at 555–569 (TSSSSLPSFPSTLSW) shows a compositional bias: low complexity. Over residues 570 to 583 (SRDESTRRASRLEK) the composition is skewed to basic and acidic residues.

In terms of assembly, may form heterooligomers with GIT1. Directly interacts with protein Piccolo/PCLO. Interacts with PPFIA1 and PPFIA2. Interacts with ARHGEF7. Identified in a complex with ARHGEF6 and BIN2. Interacts with PAK3. Interacts with PXN/paxillin. Interacts with TGFB1I1. Forms a complex with EFNB1 and GRB4/NCK2.

Its function is as follows. GTPase-activating protein for ADP ribosylation factor family members, including ARF1. The chain is ARF GTPase-activating protein GIT2 (Git2) from Rattus norvegicus (Rat).